Here is a 374-residue protein sequence, read N- to C-terminus: Probable tuliposide A-converting enzyme b6, amyloplastic (374 aa).

An amyloplast-targeting transit peptide spans 1 to 68; that stretch reads MSVALFCGPP…TNSSLSPSPT (68 aa). Serine 226 serves as the catalytic Acyl-ester intermediate. Active-site charge relay system residues include aspartate 316 and histidine 348.

This sequence belongs to the AB hydrolase superfamily. In terms of assembly, homodimer.

It localises to the plastid. The protein localises to the amyloplast. It carries out the reaction 6-tuliposide A = tulipalin A + D-glucose. Its function is as follows. Lactone-forming carboxylesterases, specifically catalyzing intramolecular transesterification, but not hydrolysis. Involved in the biosynthesis of tulipalins, defensive chemicals that show antimicrobial activities against a broad range of strains of bacteria and fungi. Substrates are 6-tuliposide A &gt; 6-tuliposide B. The chain is Probable tuliposide A-converting enzyme b6, amyloplastic (TCEA-B6) from Tulipa gesneriana (Garden tulip).